Consider the following 354-residue polypeptide: UDP-N-acetylglucosamine--N-acetylmuramyl-(pentapeptide) pyrophosphoryl-undecaprenol N-acetylglucosamine transferase (354 aa).

UDP-N-acetyl-alpha-D-glucosamine-binding positions include 15–17, Asn-127, Arg-163, Ser-191, Ile-244, 263–268, and Gln-288; these read TGG and ALTVSE.

This sequence belongs to the glycosyltransferase 28 family. MurG subfamily.

Its subcellular location is the cell inner membrane. It carries out the reaction di-trans,octa-cis-undecaprenyl diphospho-N-acetyl-alpha-D-muramoyl-L-alanyl-D-glutamyl-meso-2,6-diaminopimeloyl-D-alanyl-D-alanine + UDP-N-acetyl-alpha-D-glucosamine = di-trans,octa-cis-undecaprenyl diphospho-[N-acetyl-alpha-D-glucosaminyl-(1-&gt;4)]-N-acetyl-alpha-D-muramoyl-L-alanyl-D-glutamyl-meso-2,6-diaminopimeloyl-D-alanyl-D-alanine + UDP + H(+). It functions in the pathway cell wall biogenesis; peptidoglycan biosynthesis. Functionally, cell wall formation. Catalyzes the transfer of a GlcNAc subunit on undecaprenyl-pyrophosphoryl-MurNAc-pentapeptide (lipid intermediate I) to form undecaprenyl-pyrophosphoryl-MurNAc-(pentapeptide)GlcNAc (lipid intermediate II). The protein is UDP-N-acetylglucosamine--N-acetylmuramyl-(pentapeptide) pyrophosphoryl-undecaprenol N-acetylglucosamine transferase of Aliivibrio salmonicida (strain LFI1238) (Vibrio salmonicida (strain LFI1238)).